We begin with the raw amino-acid sequence, 175 residues long: Putative adenylate cyclase MJ0240 (175 aa).

The CYTH domain maps to 1 to 175 (MIEVEIKVKI…RKSYLELRGL (175 aa)). Catalysis depends on Tyr-37, which acts as the Proton acceptor.

It belongs to the adenylyl cyclase CyaB family.

It localises to the cytoplasm. It catalyses the reaction ATP = 3',5'-cyclic AMP + diphosphate. Its function is as follows. Could catalyze the biosynthesis of cyclic AMP (cAMP) from ATP. The sequence is that of Putative adenylate cyclase MJ0240 from Methanocaldococcus jannaschii (strain ATCC 43067 / DSM 2661 / JAL-1 / JCM 10045 / NBRC 100440) (Methanococcus jannaschii).